Here is a 277-residue protein sequence, read N- to C-terminus: Probable endonuclease 4 (277 aa).

Residues H70, H108, E145, D178, H181, H212, D225, H227, and E257 each coordinate Zn(2+).

It belongs to the AP endonuclease 2 family. Requires Zn(2+) as cofactor.

It carries out the reaction Endonucleolytic cleavage to 5'-phosphooligonucleotide end-products.. In terms of biological role, endonuclease IV plays a role in DNA repair. It cleaves phosphodiester bonds at apurinic or apyrimidinic (AP) sites, generating a 3'-hydroxyl group and a 5'-terminal sugar phosphate. This is Probable endonuclease 4 from Mycoplasmopsis pulmonis (strain UAB CTIP) (Mycoplasma pulmonis).